Here is a 393-residue protein sequence, read N- to C-terminus: O-phospho-L-seryl-tRNA:Cys-tRNA synthase 1 (393 aa).

Pyridoxal 5'-phosphate is bound by residues 85-86 (AR), Asn190, and 213-215 (SGH). N6-(pyridoxal phosphate)lysine is present on Lys216.

The protein belongs to the SepCysS family. As to quaternary structure, homodimer. Interacts with SepRS. It depends on pyridoxal 5'-phosphate as a cofactor.

It catalyses the reaction O-phospho-L-seryl-tRNA(Cys) + hydrogen sulfide + H(+) = L-cysteinyl-tRNA(Cys) + phosphate. Functionally, converts O-phospho-L-seryl-tRNA(Cys) (Sep-tRNA(Cys)) to L-cysteinyl-tRNA(Cys) (Cys-tRNA(Cys)). The polypeptide is O-phospho-L-seryl-tRNA:Cys-tRNA synthase 1 (Methanospirillum hungatei JF-1 (strain ATCC 27890 / DSM 864 / NBRC 100397 / JF-1)).